The primary structure comprises 322 residues: Acetyl-coenzyme A carboxylase carboxyl transferase subunit beta (322 aa).

Positions 24–293 constitute a CoA carboxyltransferase N-terminal domain; sequence LWIKCPDTGQ…PAVEEIAASD (270 aa).

The protein belongs to the AccD/PCCB family. Acetyl-CoA carboxylase is a heterohexamer composed of biotin carboxyl carrier protein (AccB), biotin carboxylase (AccC) and two subunits each of ACCase subunit alpha (AccA) and ACCase subunit beta (AccD).

It localises to the cytoplasm. It catalyses the reaction N(6)-carboxybiotinyl-L-lysyl-[protein] + acetyl-CoA = N(6)-biotinyl-L-lysyl-[protein] + malonyl-CoA. It participates in lipid metabolism; malonyl-CoA biosynthesis; malonyl-CoA from acetyl-CoA: step 1/1. Functionally, component of the acetyl coenzyme A carboxylase (ACC) complex. Biotin carboxylase (BC) catalyzes the carboxylation of biotin on its carrier protein (BCCP) and then the CO(2) group is transferred by the transcarboxylase to acetyl-CoA to form malonyl-CoA. The chain is Acetyl-coenzyme A carboxylase carboxyl transferase subunit beta from Rhodopseudomonas palustris (strain BisB5).